The sequence spans 284 residues: Avenin-like b9 (284 aa).

Residues 1–18 (MKVFILALLALAATTAIA) form the signal peptide.

This sequence belongs to the prolamin family. In terms of processing, contains disulfide bonds.

Seed storage protein. Might be integrated via inter-chain disulfide bonds within the glutenin polymer. The protein is Avenin-like b9 of Triticum aestivum (Wheat).